A 412-amino-acid chain; its full sequence is MLRWITAGESHGRALVAVLEGMVAGVELTSEDIGRQLARRRLGYGRGARMAFEADQVTMLGGVRHGLTLGGPVAIEVGNTEWPKWETVMSPDPVDPAELQNIARNAPLTRPRPGHADYAGMLKYGFDDARPVLERASARETAARVAVGTLAKAFLKQALGVDVISHVISIGDSDPYEGPVPDAADLAAIDASPVRAFDAQAESSMISEIEAAKKDGDTLGGVVEVVVAGLPVGLGSFISGQDRLDSQLAAAIMGIQAIKGVEIGDGFTTARRRGSAAHDEIYPGPDGILRSTNRAGGLEGGMTNGQPLRVRAAMKPISTVPRALATVDMSTGDEAVAIHQRSDVCAVPAAGVVAEAMVALVVARAALEKFGGDSLSETKTNVAAYLDAVAQREPRQESSDEQPARRAANTAG.

Arginine 40 and arginine 46 together coordinate NADP(+). Residues 135–137 (RAS), 256–257 (QA), glycine 300, 315–319 (KPIST), and arginine 341 each bind FMN. A compositionally biased stretch (basic and acidic residues) spans 391 to 404 (QREPRQESSDEQPA). The segment at 391-412 (QREPRQESSDEQPARRAANTAG) is disordered.

The protein belongs to the chorismate synthase family. Homotetramer. Requires FMNH2 as cofactor.

It carries out the reaction 5-O-(1-carboxyvinyl)-3-phosphoshikimate = chorismate + phosphate. It functions in the pathway metabolic intermediate biosynthesis; chorismate biosynthesis; chorismate from D-erythrose 4-phosphate and phosphoenolpyruvate: step 7/7. Functionally, catalyzes the anti-1,4-elimination of the C-3 phosphate and the C-6 proR hydrogen from 5-enolpyruvylshikimate-3-phosphate (EPSP) to yield chorismate, which is the branch point compound that serves as the starting substrate for the three terminal pathways of aromatic amino acid biosynthesis. This reaction introduces a second double bond into the aromatic ring system. The protein is Chorismate synthase of Mycobacteroides abscessus (strain ATCC 19977 / DSM 44196 / CCUG 20993 / CIP 104536 / JCM 13569 / NCTC 13031 / TMC 1543 / L948) (Mycobacterium abscessus).